A 475-amino-acid chain; its full sequence is Ribulose bisphosphate carboxylase large chain (475 aa).

Residues 1–2 (MS) constitute a propeptide that is removed on maturation. Pro-3 is modified (N-acetylproline). At Lys-14 the chain carries N6,N6,N6-trimethyllysine. Residue Lys-175 is the Proton acceptor of the active site. D-ribulose 1,5-bisphosphate-binding residues include Lys-175 and Lys-177. Lys-201, Asp-203, and Glu-204 together coordinate Mg(2+). N6-carboxylysine is present on Lys-201. D-ribulose 1,5-bisphosphate is bound at residue Glu-204. His-294 functions as the Proton acceptor in the catalytic mechanism. Residues Arg-295, His-327, Lys-334, Ser-379, Gly-381, Gly-403, and Gly-404 each contribute to the D-ribulose 1,5-bisphosphate site.

This sequence belongs to the RuBisCO large chain family. Type I subfamily. Heterohexadecamer of 8 large chains and 8 small chains. Heterohexadecamer; disulfide-linked. The disulfide link is formed within the large subunit homodimers. Mg(2+) serves as cofactor. The disulfide bond which can form in the large chain dimeric partners within the hexadecamer appears to be associated with oxidative stress and protein turnover.

Its subcellular location is the plastid. The protein localises to the chloroplast. It catalyses the reaction 2 (2R)-3-phosphoglycerate + 2 H(+) = D-ribulose 1,5-bisphosphate + CO2 + H2O. The enzyme catalyses D-ribulose 1,5-bisphosphate + O2 = 2-phosphoglycolate + (2R)-3-phosphoglycerate + 2 H(+). Its function is as follows. RuBisCO catalyzes two reactions: the carboxylation of D-ribulose 1,5-bisphosphate, the primary event in carbon dioxide fixation, as well as the oxidative fragmentation of the pentose substrate in the photorespiration process. Both reactions occur simultaneously and in competition at the same active site. Binds to abscisic acid (ABA); only half of the possible binding sites are occupied in the crystal and there are indications this is a low affinity site. The protein is Ribulose bisphosphate carboxylase large chain of Pisum sativum (Garden pea).